A 249-amino-acid polypeptide reads, in one-letter code: Coproheme decarboxylase (249 aa).

Fe-coproporphyrin III-binding positions include Arg131, 145–149, His172, Gln185, and Ser223; that span reads YPMDK. Tyr145 is an active-site residue.

This sequence belongs to the ChdC family. Type 1 subfamily. The cofactor is Fe-coproporphyrin III.

It carries out the reaction Fe-coproporphyrin III + 2 H2O2 + 2 H(+) = heme b + 2 CO2 + 4 H2O. The catalysed reaction is Fe-coproporphyrin III + H2O2 + H(+) = harderoheme III + CO2 + 2 H2O. It catalyses the reaction harderoheme III + H2O2 + H(+) = heme b + CO2 + 2 H2O. It functions in the pathway porphyrin-containing compound metabolism; protoheme biosynthesis. Functionally, involved in coproporphyrin-dependent heme b biosynthesis. Catalyzes the decarboxylation of Fe-coproporphyrin III (coproheme) to heme b (protoheme IX), the last step of the pathway. The reaction occurs in a stepwise manner with a three-propionate intermediate. The protein is Coproheme decarboxylase of Halalkalibacterium halodurans (strain ATCC BAA-125 / DSM 18197 / FERM 7344 / JCM 9153 / C-125) (Bacillus halodurans).